Here is a 230-residue protein sequence, read N- to C-terminus: Phosphoribosylformylglycinamidine synthase subunit PurQ (230 aa).

The region spanning 2–226 is the Glutamine amidotransferase type-1 domain; the sequence is RVAVIVFPGS…LKTWREQNSV (225 aa). Cysteine 86 functions as the Nucleophile in the catalytic mechanism. Active-site residues include histidine 195 and glutamate 197.

Part of the FGAM synthase complex composed of 1 PurL, 1 PurQ and 2 PurS subunits.

Its subcellular location is the cytoplasm. The catalysed reaction is N(2)-formyl-N(1)-(5-phospho-beta-D-ribosyl)glycinamide + L-glutamine + ATP + H2O = 2-formamido-N(1)-(5-O-phospho-beta-D-ribosyl)acetamidine + L-glutamate + ADP + phosphate + H(+). It carries out the reaction L-glutamine + H2O = L-glutamate + NH4(+). It functions in the pathway purine metabolism; IMP biosynthesis via de novo pathway; 5-amino-1-(5-phospho-D-ribosyl)imidazole from N(2)-formyl-N(1)-(5-phospho-D-ribosyl)glycinamide: step 1/2. In terms of biological role, part of the phosphoribosylformylglycinamidine synthase complex involved in the purines biosynthetic pathway. Catalyzes the ATP-dependent conversion of formylglycinamide ribonucleotide (FGAR) and glutamine to yield formylglycinamidine ribonucleotide (FGAM) and glutamate. The FGAM synthase complex is composed of three subunits. PurQ produces an ammonia molecule by converting glutamine to glutamate. PurL transfers the ammonia molecule to FGAR to form FGAM in an ATP-dependent manner. PurS interacts with PurQ and PurL and is thought to assist in the transfer of the ammonia molecule from PurQ to PurL. The polypeptide is Phosphoribosylformylglycinamidine synthase subunit PurQ (Brevibacillus brevis (strain 47 / JCM 6285 / NBRC 100599)).